The primary structure comprises 638 residues: Homeobox protein 10 (638 aa).

Disordered regions lie at residues 23–55 (ETQP…LNTN), 76–139 (TDEN…VNTN), and 195–219 (IANE…EEAK). Composition is skewed to low complexity over residues 24-55 (TQPT…LNTN) and 80-139 (NTSV…VNTN). Over residues 205–214 (EPQTNSNVNG) the composition is skewed to polar residues. Positions 301–360 (NKKKRQRTSPEQLAILEQIFETDKMPSQQIRVRLANQLGMSSRRVQIWFQNKRAKVKRGG) form a DNA-binding region, homeobox. 2 disordered regions span residues 381 to 431 (EDED…TSSD) and 448 to 638 (SSSS…IVKN). 3 stretches are compositionally biased toward low complexity: residues 388 to 411 (SLTI…NNNG), 419 to 430 (LSSSPTNLNTSS), and 462 to 501 (NNTN…TTTT). 2 stretches are compositionally biased toward polar residues: residues 502-522 (SSSP…NKLT) and 545-573 (SLNS…TDKQ). Positions 575–625 (NSDFSNFNNNNNNNNNNNNNNNNNNNINNNGNNNSNNNDSNNNNNKSNFSD) are enriched in low complexity.

The protein resides in the nucleus. Functionally, putative transcription factor. This Dictyostelium discoideum (Social amoeba) protein is Homeobox protein 10 (hbx10).